A 2646-amino-acid polypeptide reads, in one-letter code: Probable inactive serine/threonine-protein kinase roco10 (2646 aa).

Disordered stretches follow at residues 28 to 122 (LNYS…LSGG), 138 to 168 (NIPI…KDKD), 205 to 248 (PLFI…VSPS), 281 to 457 (QQQR…VKQA), 477 to 516 (MSKL…HTSP), 605 to 656 (TSPN…PHQY), and 882 to 907 (QSSS…STPS). Polar residues predominate over residues 46-56 (PQQNLLENDTL). Composition is skewed to low complexity over residues 78–115 (IITT…TSPS), 147–161 (SPTS…NNNN), and 215–228 (SRNN…GGNK). Residues 235–248 (KISSTSAAGDVSPS) are compositionally biased toward polar residues. 2 stretches are compositionally biased toward low complexity: residues 285–297 (NGNN…NNNN) and 325–334 (NNNNNNNNNN). Residues 335–345 (KQPQHPMNGNH) show a composition bias toward polar residues. Residues 346–394 (SPSNGTSGSLSMSGSGIDNGGNNNNNSNTHGSSSNQSSGVTSPIIQSTS) show a composition bias toward low complexity. Polar residues-rich tracts occupy residues 402-416 (GLNS…SSPT) and 428-443 (TSAS…PLMN). Low complexity-rich tracts occupy residues 444–454 (STGVSSSSSGV), 491–516 (PSSP…HTSP), 605–627 (TSPN…NSSP), 634–651 (QQQQ…NTNT), and 883–907 (SSSS…STPS). Residues 585–807 (SSISPISTAA…MFIQQADILF (223 aa)) form the Rho-GAP domain. LRR repeat units follow at residues 968–987 (QKLD…IKQL), 989–1011 (DLQE…ARLT), 1012–1033 (SLRT…MADF), 1040–1061 (NLEN…YTWL), 1062–1083 (KLKT…IFQI), 1085–1108 (TLEV…CTST), 1109–1131 (KLRS…INLV), 1132–1154 (ELQV…QKLT), 1155–1176 (SLTE…LLLL), 1178–1199 (NLKK…IHRM), 1201–1222 (SLIE…IVAL), 1224–1247 (KLNS…YIQK), 1248–1270 (GKEG…YRTR), 1271–1298 (IIML…SFSS), and 1303–1327 (LPSL…ILDI). Positions 1262–1474 (TNVPCYRTRI…RDIKQMIAKN (213 aa)) constitute a Roc domain. Disordered stretches follow at residues 1293–1317 (KSSF…SNNS), 1651–1670 (NNNN…SRSM), and 1957–2026 (NNSS…KEKE). Positions 1651-1669 (NNNNSNGNNVGRGRSGSRS) are enriched in low complexity. A compositionally biased stretch (polar residues) spans 1966–1975 (PIASSRSNPK). A compositionally biased stretch (low complexity) spans 1983 to 1996 (NLIQSNNNDNNNSL). Basic and acidic residues predominate over residues 1997-2026 (SKKDLKELAKQNKEKEKEKEKDKDKEKEKE). In terms of domain architecture, Protein kinase spans 2049–2342 (FSICHFIKEI…PSKIISQLYT (294 aa)). ATP contacts are provided by residues 2055–2063 (IKEIDYREI) and Lys2094. One can recognise an RGS domain in the interval 2412–2536 (MVVLNNKQST…FTVPTTNKNG (125 aa)).

Belongs to the protein kinase superfamily. TKL Ser/Thr protein kinase family. ROCO subfamily.

The polypeptide is Probable inactive serine/threonine-protein kinase roco10 (roco10) (Dictyostelium discoideum (Social amoeba)).